The chain runs to 808 residues: Protein SEY1 (808 aa).

Residues 1–21 form a disordered region; that stretch reads MSSELSEGELSHTSSSSSFVP. The Cytoplasmic segment spans residues 1–701; it reads MSSELSEGEL…KRSIVQHITQ (701 aa). Residues 57-286 enclose the GB1/RHD3-type G domain; it reads GNNYHIISVF…VGDELFKPEY (230 aa). GTP is bound at residue 67 to 74; the sequence is GSQSTGKS. Residues 702-722 form a helical membrane-spanning segment; that stretch reads IPYYIYLVIVFLGWNEFMAII. The Lumenal portion of the chain corresponds to 723–725; that stretch reads RNP. A helical membrane pass occupies residues 726–746; sequence LLFSLALLLGASVYILYKLNL. Over 747-808 the chain is Cytoplasmic; that stretch reads LKPAIVVAQR…YSDNIELDDM (62 aa).

Belongs to the TRAFAC class dynamin-like GTPase superfamily. GB1/RHD3 GTPase family. RHD3 subfamily.

It is found in the endoplasmic reticulum membrane. Its function is as follows. Cooperates with the reticulon proteins and tubule-shaping DP1 family proteins to generate and maintain the structure of the tubular endoplasmic reticulum network. Has GTPase activity, which is required for its function in ER organization. In Candida tropicalis (strain ATCC MYA-3404 / T1) (Yeast), this protein is Protein SEY1.